Here is a 307-residue protein sequence, read N- to C-terminus: Acyl transferase (307 aa).

Residues S116, D213, and H243 each act as charge relay system in the active site.

The protein belongs to the LuxD family.

It participates in lipid metabolism; fatty acid reduction for biolumincescence. In terms of biological role, acyl transferase is part of the fatty acid reductase system required for aldehyde biosynthesis; it produces fatty acids for the luminescent reaction. In Aliivibrio fischeri (strain MJ11) (Vibrio fischeri), this protein is Acyl transferase.